The chain runs to 491 residues: Glutamyl-tRNA(Gln) amidotransferase subunit A (491 aa).

Catalysis depends on charge relay system residues Lys79 and Ser154. The active-site Acyl-ester intermediate is the Ser178.

The protein belongs to the amidase family. GatA subfamily. As to quaternary structure, heterotrimer of A, B and C subunits.

The catalysed reaction is L-glutamyl-tRNA(Gln) + L-glutamine + ATP + H2O = L-glutaminyl-tRNA(Gln) + L-glutamate + ADP + phosphate + H(+). Functionally, allows the formation of correctly charged Gln-tRNA(Gln) through the transamidation of misacylated Glu-tRNA(Gln) in organisms which lack glutaminyl-tRNA synthetase. The reaction takes place in the presence of glutamine and ATP through an activated gamma-phospho-Glu-tRNA(Gln). The polypeptide is Glutamyl-tRNA(Gln) amidotransferase subunit A (Synechococcus sp. (strain CC9605)).